Here is a 154-residue protein sequence, read N- to C-terminus: Neurotrophin-3 (154 aa).

The first 18 residues, 1–18 (MSILFYVMFLAYLRGVQG), serve as a signal peptide directing secretion. Positions 19-134 (NSMDQRSLPE…VNSRSPRRKR (116 aa)) are excised as a propeptide.

It belongs to the NGF-beta family.

It localises to the secreted. In terms of biological role, seems to promote the survival of visceral and proprioceptive sensory neurons. This chain is Neurotrophin-3 (NTF3), found in Cervus elaphus (Red deer).